A 149-amino-acid polypeptide reads, in one-letter code: Calmodulin (149 aa).

Alanine 2 bears the N-acetylalanine mark. EF-hand domains lie at 8–43, 44–79, 81–116, and 117–149; these read DQIS…LGQN, PTEA…KMKD, DSEE…LGEK, and LTDE…MMAK. Aspartate 21, aspartate 23, aspartate 25, cysteine 27, glutamate 32, aspartate 57, aspartate 59, asparagine 61, threonine 63, glutamate 68, aspartate 94, aspartate 96, asparagine 98, and glutamate 105 together coordinate Ca(2+). At lysine 116 the chain carries N6,N6,N6-trimethyllysine. Ca(2+)-binding residues include aspartate 130, aspartate 132, aspartate 134, glutamine 136, and glutamate 141.

The protein belongs to the calmodulin family.

Its function is as follows. Calmodulin mediates the control of a large number of enzymes, ion channels and other proteins by Ca(2+). Among the enzymes to be stimulated by the calmodulin-Ca(2+) complex are a number of protein kinases and phosphatases. The polypeptide is Calmodulin (CAM) (Malus domestica (Apple)).